We begin with the raw amino-acid sequence, 62 residues long: uncharacterized protein (62 aa).

This is an uncharacterized protein from Escherichia coli (Bacteriophage T4).